Here is a 294-residue protein sequence, read N- to C-terminus: G-protein coupled receptor homolog U51 (294 aa).

The Extracellular segment spans residues 1–14 (MKNIDLTNWKLLAE). Residues 15 to 35 (IYEYLFFFSFFFLCLLVIIVV) form a helical membrane-spanning segment. Residues 36–47 (KFNNSTVGREYT) are Cytoplasmic-facing. Residues 48 to 68 (FSTFSGMLVYILLLPVKMGML) form a helical membrane-spanning segment. Topologically, residues 69 to 79 (TKMWDVSTDYC) are extracellular. The chain crosses the membrane as a helical span at residues 80 to 102 (IILMFLSDFSFIFSSWALTLLAL). At 103 to 119 (ERINNFSFSEIKVNETK) the chain is on the cytoplasmic side. The chain crosses the membrane as a helical span at residues 120–140 (ILKQMSFPIIWVTSIFQAVQI). Residues 141 to 166 (SMKYKKSQMNLEDDYCLLAIERSAEE) are Extracellular-facing. Residues 167–187 (AWILLMYTVVIPTFIVFFYVL) form a helical membrane-spanning segment. Residues 188 to 200 (NKRFLFLERDLNS) lie on the Cytoplasmic side of the membrane. Residues 201–221 (IVTHLSLFLFFGALCFFPASV) form a helical membrane-spanning segment. The Extracellular portion of the chain corresponds to 222 to 236 (LNEFNCNRLFYGLHE). Residues 237 to 257 (LLIVCLELKIFYVPTMTYIIS) form a helical membrane-spanning segment. Over 258–294 (CENYRLAAKAFFCKCFKPCFLMPSLRKLQQPTKSTQF) the chain is Cytoplasmic.

Belongs to the G-protein coupled receptor 1 family.

It is found in the host cell membrane. This chain is G-protein coupled receptor homolog U51 (U51), found in Human herpesvirus 7 (strain JI) (HHV-7).